The chain runs to 243 residues: Zinc import ATP-binding protein ZnuC (243 aa).

An ABC transporter domain is found at leucine 8–histidine 225. An ATP-binding site is contributed by glycine 40 to serine 47.

This sequence belongs to the ABC transporter superfamily. Zinc importer (TC 3.A.1.15.5) family. As to quaternary structure, the complex is composed of two ATP-binding proteins (ZnuC), two transmembrane proteins (ZnuB) and a solute-binding protein (ZnuA).

The protein resides in the cell inner membrane. It catalyses the reaction Zn(2+)(out) + ATP(in) + H2O(in) = Zn(2+)(in) + ADP(in) + phosphate(in) + H(+)(in). Functionally, part of the ABC transporter complex ZnuABC involved in zinc import. Responsible for energy coupling to the transport system. This is Zinc import ATP-binding protein ZnuC from Psychrobacter arcticus (strain DSM 17307 / VKM B-2377 / 273-4).